The primary structure comprises 513 residues: GMP synthase [glutamine-hydrolyzing] (513 aa).

In terms of domain architecture, Glutamine amidotransferase type-1 spans 8 to 198 (KIIVLDYGSQ…ALNICGAKGN (191 aa)). Cys85 functions as the Nucleophile in the catalytic mechanism. Residues His172 and Glu174 contribute to the active site. The region spanning 199–388 (WSMENFIDMQ…LGMPDEIVWR (190 aa)) is the GMPS ATP-PPase domain. 226–232 (SGGVDSS) serves as a coordination point for ATP.

In terms of assembly, homodimer.

The enzyme catalyses XMP + L-glutamine + ATP + H2O = GMP + L-glutamate + AMP + diphosphate + 2 H(+). Its pathway is purine metabolism; GMP biosynthesis; GMP from XMP (L-Gln route): step 1/1. Functionally, catalyzes the synthesis of GMP from XMP. This chain is GMP synthase [glutamine-hydrolyzing] (guaA), found in Lactococcus lactis subsp. cremoris (strain MG1363).